The primary structure comprises 465 residues: UDP-N-acetylmuramate--L-alanine ligase (465 aa).

ATP is bound at residue 112–118; the sequence is GTHGKTT.

Belongs to the MurCDEF family.

It localises to the cytoplasm. The catalysed reaction is UDP-N-acetyl-alpha-D-muramate + L-alanine + ATP = UDP-N-acetyl-alpha-D-muramoyl-L-alanine + ADP + phosphate + H(+). The protein operates within cell wall biogenesis; peptidoglycan biosynthesis. Its function is as follows. Cell wall formation. The chain is UDP-N-acetylmuramate--L-alanine ligase from Burkholderia ambifaria (strain ATCC BAA-244 / DSM 16087 / CCUG 44356 / LMG 19182 / AMMD) (Burkholderia cepacia (strain AMMD)).